The primary structure comprises 186 residues: Large ribosomal subunit protein uL5m (186 aa).

Belongs to the universal ribosomal protein uL5 family.

The protein localises to the mitochondrion. This Solanum tuberosum (Potato) protein is Large ribosomal subunit protein uL5m (RPL5).